Consider the following 183-residue polypeptide: ATP synthase subunit b, chloroplastic (183 aa).

Residues 27–49 form a helical membrane-spanning segment; the sequence is LATNLINLTVVVGVLIFFGKGVL.

It belongs to the ATPase B chain family. As to quaternary structure, F-type ATPases have 2 components, F(1) - the catalytic core - and F(0) - the membrane proton channel. F(1) has five subunits: alpha(3), beta(3), gamma(1), delta(1), epsilon(1). F(0) has four main subunits: a(1), b(1), b'(1) and c(10-14). The alpha and beta chains form an alternating ring which encloses part of the gamma chain. F(1) is attached to F(0) by a central stalk formed by the gamma and epsilon chains, while a peripheral stalk is formed by the delta, b and b' chains.

It is found in the plastid. Its subcellular location is the chloroplast thylakoid membrane. In terms of biological role, f(1)F(0) ATP synthase produces ATP from ADP in the presence of a proton or sodium gradient. F-type ATPases consist of two structural domains, F(1) containing the extramembraneous catalytic core and F(0) containing the membrane proton channel, linked together by a central stalk and a peripheral stalk. During catalysis, ATP synthesis in the catalytic domain of F(1) is coupled via a rotary mechanism of the central stalk subunits to proton translocation. Its function is as follows. Component of the F(0) channel, it forms part of the peripheral stalk, linking F(1) to F(0). In Lolium perenne (Perennial ryegrass), this protein is ATP synthase subunit b, chloroplastic.